The sequence spans 134 residues: Transmembrane protein 100 (134 aa).

A disordered region spans residues 1 to 24 (MTEEPTKENLGGPKSPTPVTMEKS). Residue Ser15 is modified to Phosphoserine. 2 helical membrane-spanning segments follow: residues 56 to 76 (CIIP…AVAY) and 84 to 104 (VISI…ASSA). Ser121 bears the Phosphoserine mark.

As to quaternary structure, interacts (via C-terminus) with TRPA1 and TRPV1. Interacts with TASOR.

It localises to the cell membrane. Its subcellular location is the membrane. It is found in the perikaryon. The protein localises to the cytoplasm. The protein resides in the perinuclear region. It localises to the endoplasmic reticulum. In terms of biological role, plays a role during embryonic arterial endothelium differentiation and vascular morphogenesis through the ACVRL1 receptor-dependent signaling pathway upon stimulation by bone morphogenetic proteins, such as GDF2/BMP9 and BMP10. Involved in the regulation of nociception, acting as a modulator of the interaction between TRPA1 and TRPV1, two molecular sensors and mediators of pain signals in dorsal root ganglia (DRG) neurons. Mechanistically, it weakens their interaction, thereby releasing the inhibition of TRPA1 by TRPV1 and increasing the single-channel open probability of the TRPA1-TRPV1 complex. This Rattus norvegicus (Rat) protein is Transmembrane protein 100 (Tmem100).